A 55-amino-acid polypeptide reads, in one-letter code: MAKSSREKIKLISSSGSKHYYTTTKNKKAPSKKIELKKYDPKIRKHVLYKEAKIK.

It belongs to the bacterial ribosomal protein bL33 family.

The chain is Large ribosomal subunit protein bL33 from Buchnera aphidicola subsp. Baizongia pistaciae (strain Bp).